Here is a 278-residue protein sequence, read N- to C-terminus: 2-dehydro-3-deoxyphosphooctonate aldolase (278 aa).

Belongs to the KdsA family.

Its subcellular location is the cytoplasm. It carries out the reaction D-arabinose 5-phosphate + phosphoenolpyruvate + H2O = 3-deoxy-alpha-D-manno-2-octulosonate-8-phosphate + phosphate. The protein operates within carbohydrate biosynthesis; 3-deoxy-D-manno-octulosonate biosynthesis; 3-deoxy-D-manno-octulosonate from D-ribulose 5-phosphate: step 2/3. It functions in the pathway bacterial outer membrane biogenesis; lipopolysaccharide biosynthesis. The chain is 2-dehydro-3-deoxyphosphooctonate aldolase from Koribacter versatilis (strain Ellin345).